A 239-amino-acid polypeptide reads, in one-letter code: Ribonuclease PH (239 aa).

Phosphate-binding positions include Arg-86 and 124 to 126; that span reads GTR.

The protein belongs to the RNase PH family. In terms of assembly, homohexameric ring arranged as a trimer of dimers.

The catalysed reaction is tRNA(n+1) + phosphate = tRNA(n) + a ribonucleoside 5'-diphosphate. Functionally, phosphorolytic 3'-5' exoribonuclease that plays an important role in tRNA 3'-end maturation. Removes nucleotide residues following the 3'-CCA terminus of tRNAs; can also add nucleotides to the ends of RNA molecules by using nucleoside diphosphates as substrates, but this may not be physiologically important. Probably plays a role in initiation of 16S rRNA degradation (leading to ribosome degradation) during starvation. The chain is Ribonuclease PH from Sinorhizobium fredii (strain NBRC 101917 / NGR234).